A 373-amino-acid chain; its full sequence is AA9 family lytic polysaccharide monooxygenase A (373 aa).

An N-terminal signal peptide occupies residues 1-20 (MKSSTFGMLALAAAAKLVSA). Histidine 21 contributes to the Cu(2+) binding site. A disordered region spans residues 36–55 (EGNSQSGYIRSPPSNSPITD). An intrachain disulfide couples cysteine 63 to cysteine 183. Histidine 102 provides a ligand contact to Cu(2+). O2 contacts are provided by histidine 169 and glutamine 178. Tyrosine 180 lines the Cu(2+) pocket. Positions 234–333 (GASGSSSSSS…NSVPQPSSNA (100 aa)) are disordered. Low complexity-rich tracts occupy residues 235–262 (ASGS…APSS) and 270–323 (PATS…AAPT). Positions 324-333 (NSVPQPSSNA) are enriched in polar residues. Residues 335-371 (GAVKEWYQCGGLNYSGSTQCEEGLTCKKWNPYYHQCV) form the CBM1 domain. N-linked (GlcNAc...) asparagine glycosylation is present at asparagine 347.

Belongs to the polysaccharide monooxygenase AA9 family. Cu(2+) is required as a cofactor.

It is found in the secreted. It carries out the reaction [(1-&gt;4)-beta-D-glucosyl]n+m + reduced acceptor + O2 = 4-dehydro-beta-D-glucosyl-[(1-&gt;4)-beta-D-glucosyl]n-1 + [(1-&gt;4)-beta-D-glucosyl]m + acceptor + H2O.. Lytic polysaccharide monooxygenase (LPMO) that depolymerizes crystalline and amorphous polysaccharides via the oxidation of scissile alpha- or beta-(1-4)-glycosidic bonds, yielding exclusively C4 oxidation products. Catalysis by LPMOs requires the reduction of the active-site copper from Cu(II) to Cu(I) by a reducing agent and H(2)O(2) or O(2) as a cosubstrate. In addition to cellulose, also cleaves the beta-(1!4)-glucan backbone of tamarind xyloglucan, but only next to unsubstituted glucosyl units. This chain is AA9 family lytic polysaccharide monooxygenase A, found in Aspergillus tamarii.